The primary structure comprises 317 residues: Transcription factor EC (317 aa).

Residues 1 to 90 form a necessary for transcriptional transactivation region; sequence MTLDHRLFSQ…GLMNASCPSI (90 aa). The bHLH domain maps to 110 to 163; the sequence is QKKDNHNLIERRRRYNINYRIKELGTLIPKSNDPDIRWNKGTILKASVDYIKWL. Residues 242-317 are necessary for transcriptional transactivation; the sequence is TSPEFYEQAV…SLSSEDGDEL (76 aa).

Belongs to the MiT/TFE family. Homodimer. Forms heterodimers with TFE3. Forms heterodimers with MITF. Interacts with MITF. As to expression, expressed in kidney, spleen, lung, liver, testis and muscle.

It is found in the nucleus. Its function is as follows. Transcriptional regulator that acts as a repressor or an activator. Acts as a transcriptional repressor on minimal promoter containing mu E3 enhancer sequence. Binds to mu E3 DNA sequence of the immunoglobulin heavy-chain gene enhancer. Acts as a transcriptional transactivator on the proximal promoter region of the tartrate-resistant acid phosphatase (TRAP) E-box containing promoter. Collaborates with MITF in target gene activation. Acts as a transcriptional repressor on minimal promoter containing mu E3 enhancer sequence. Binds to mu E3 DNA sequence of the immunoglobulin heavy-chain gene enhancer. Binds DNA in a homo- or heterodimeric form. In Rattus norvegicus (Rat), this protein is Transcription factor EC (Tfec).